The primary structure comprises 321 residues: tRNA U34 carboxymethyltransferase (321 aa).

Carboxy-S-adenosyl-L-methionine is bound by residues Lys90, Trp104, Lys109, Gly129, 151–153, 180–181, Met195, Tyr199, and Arg314; these read DPT and IE.

It belongs to the class I-like SAM-binding methyltransferase superfamily. CmoB family. As to quaternary structure, homotetramer.

The catalysed reaction is carboxy-S-adenosyl-L-methionine + 5-hydroxyuridine(34) in tRNA = 5-carboxymethoxyuridine(34) in tRNA + S-adenosyl-L-homocysteine + H(+). Its function is as follows. Catalyzes carboxymethyl transfer from carboxy-S-adenosyl-L-methionine (Cx-SAM) to 5-hydroxyuridine (ho5U) to form 5-carboxymethoxyuridine (cmo5U) at position 34 in tRNAs. The chain is tRNA U34 carboxymethyltransferase from Histophilus somni (strain 129Pt) (Haemophilus somnus).